An 89-amino-acid polypeptide reads, in one-letter code: Small ribosomal subunit protein uS17 (89 aa).

It belongs to the universal ribosomal protein uS17 family. In terms of assembly, part of the 30S ribosomal subunit.

Its function is as follows. One of the primary rRNA binding proteins, it binds specifically to the 5'-end of 16S ribosomal RNA. The protein is Small ribosomal subunit protein uS17 of Polynucleobacter asymbioticus (strain DSM 18221 / CIP 109841 / QLW-P1DMWA-1) (Polynucleobacter necessarius subsp. asymbioticus).